We begin with the raw amino-acid sequence, 334 residues long: WD repeat domain 54 (334 aa).

WD repeat units lie at residues 162 to 206 (GHQT…TLLT), 208 to 247 (IAGF…LHIQ), and 250 to 289 (AHAR…ESGS).

In terms of assembly, homodimer and homotrimer; forms tight forms of dimers and trimers. Interacts with IZUMO1 and IZUMO1R/JUNO. In terms of processing, cross-linked to tightly form both dimers and trimers by TGM2. Cross-linking enhances the activation of EGF receptor-mediated signaling pathway. Cross-linking is inhibited by EGF. Ubiquitinated. EGF increases ubiquitination. Widely expressed in the ovary and testis (at protein level).

It is found in the vesicle. The protein localises to the cytoplasm. It localises to the cell membrane. Its function is as follows. Plays a role in the adhesion and fusion of the sperm-oocyte membrane through its interactions with IZUMO1 and IZUMO1R/JUNO. When cross-linked to form dimers and trimers, it has a regulatory effect on ERK signaling pathway activity in response to EGF stimulation. Colocalizes with the EGF receptor in WDR54-specific vesicle where it sustains the internalization and controls the degradation of the EGF receptor after EGF stimulation. This is WD repeat domain 54 (Wdr54) from Rattus norvegicus (Rat).